Consider the following 512-residue polypeptide: Dihydroniloticin synthase CYP71CD1 (512 aa).

Residues 7–27 (YFTVTSLLVFLTFLLRLVWGW) form a helical membrane-spanning segment. Position 451 (cysteine 451) interacts with heme.

This sequence belongs to the cytochrome P450 family. Heme serves as cofactor. As to expression, accumulates in mature fruits and in juice vesicles.

The protein resides in the membrane. The catalysed reaction is tirucalla-7,24-dien-3beta-ol + 2 reduced [NADPH--hemoprotein reductase] + 2 O2 = dihydroniloticin + 2 oxidized [NADPH--hemoprotein reductase] + 2 H2O + 2 H(+). Its pathway is secondary metabolite biosynthesis; terpenoid biosynthesis. In terms of biological role, monooxygenase involved in the biosynthesis of limonoids triterpene natural products such as limonin, a compound with insecticidal activity responsible for the bitter taste in citrus. Catalyzes the conversion of tirucalladienol to dihydroniloticin. The chain is Dihydroniloticin synthase CYP71CD1 from Citrus sinensis (Sweet orange).